Consider the following 345-residue polypeptide: Phosphoribosylformylglycinamidine cyclo-ligase (345 aa).

It belongs to the AIR synthase family.

It localises to the cytoplasm. The enzyme catalyses 2-formamido-N(1)-(5-O-phospho-beta-D-ribosyl)acetamidine + ATP = 5-amino-1-(5-phospho-beta-D-ribosyl)imidazole + ADP + phosphate + H(+). It participates in purine metabolism; IMP biosynthesis via de novo pathway; 5-amino-1-(5-phospho-D-ribosyl)imidazole from N(2)-formyl-N(1)-(5-phospho-D-ribosyl)glycinamide: step 2/2. The polypeptide is Phosphoribosylformylglycinamidine cyclo-ligase (Bifidobacterium longum subsp. infantis (strain ATCC 15697 / DSM 20088 / JCM 1222 / NCTC 11817 / S12)).